Here is a 443-residue protein sequence, read N- to C-terminus: Exodeoxyribonuclease 7 large subunit (443 aa).

The protein belongs to the XseA family. Heterooligomer composed of large and small subunits.

It localises to the cytoplasm. The catalysed reaction is Exonucleolytic cleavage in either 5'- to 3'- or 3'- to 5'-direction to yield nucleoside 5'-phosphates.. Its function is as follows. Bidirectionally degrades single-stranded DNA into large acid-insoluble oligonucleotides, which are then degraded further into small acid-soluble oligonucleotides. In Vibrio campbellii (strain ATCC BAA-1116), this protein is Exodeoxyribonuclease 7 large subunit.